Here is a 339-residue protein sequence, read N- to C-terminus: Anthranilate phosphoribosyltransferase (339 aa).

Residues glycine 81, glycine 84–aspartate 85, threonine 89, asparagine 91–threonine 94, lysine 109–serine 117, and alanine 121 contribute to the 5-phospho-alpha-D-ribose 1-diphosphate site. An anthranilate-binding site is contributed by glycine 81. Serine 93 contacts Mg(2+). Residue asparagine 112 participates in anthranilate binding. Residue arginine 167 participates in anthranilate binding. 2 residues coordinate Mg(2+): aspartate 226 and glutamate 227.

It belongs to the anthranilate phosphoribosyltransferase family. Homodimer. Mg(2+) serves as cofactor.

The catalysed reaction is N-(5-phospho-beta-D-ribosyl)anthranilate + diphosphate = 5-phospho-alpha-D-ribose 1-diphosphate + anthranilate. It functions in the pathway amino-acid biosynthesis; L-tryptophan biosynthesis; L-tryptophan from chorismate: step 2/5. In terms of biological role, catalyzes the transfer of the phosphoribosyl group of 5-phosphorylribose-1-pyrophosphate (PRPP) to anthranilate to yield N-(5'-phosphoribosyl)-anthranilate (PRA). This Roseobacter denitrificans (strain ATCC 33942 / OCh 114) (Erythrobacter sp. (strain OCh 114)) protein is Anthranilate phosphoribosyltransferase.